We begin with the raw amino-acid sequence, 294 residues long: 4-hydroxy-tetrahydrodipicolinate synthase (294 aa).

T45 contributes to the pyruvate binding site. The active-site Proton donor/acceptor is Y133. K162 (schiff-base intermediate with substrate) is an active-site residue. A pyruvate-binding site is contributed by I204.

The protein belongs to the DapA family. In terms of assembly, homotetramer; dimer of dimers.

It is found in the cytoplasm. It catalyses the reaction L-aspartate 4-semialdehyde + pyruvate = (2S,4S)-4-hydroxy-2,3,4,5-tetrahydrodipicolinate + H2O + H(+). Its pathway is amino-acid biosynthesis; L-lysine biosynthesis via DAP pathway; (S)-tetrahydrodipicolinate from L-aspartate: step 3/4. Its function is as follows. Catalyzes the condensation of (S)-aspartate-beta-semialdehyde [(S)-ASA] and pyruvate to 4-hydroxy-tetrahydrodipicolinate (HTPA). This Bartonella tribocorum (strain CIP 105476 / IBS 506) protein is 4-hydroxy-tetrahydrodipicolinate synthase.